A 471-amino-acid chain; its full sequence is Collagenase 3 (471 aa).

The first 19 residues, 1–19 (MHPGVLAAFLFLSWTHCRA), serve as a signal peptide directing secretion. Positions 20 to 103 (LPLPSGGDED…PRCGVPDVGE (84 aa)) are cleaved as a propeptide — activation peptide. Residues 94–101 (PRCGVPDV) carry the Cysteine switch motif. C96 is a binding site for Zn(2+). N117 carries N-linked (GlcNAc...) asparagine glycosylation. D128 contacts Ca(2+). The N-linked (GlcNAc...) asparagine glycan is linked to N152. D162 lines the Ca(2+) pocket. Zn(2+) contacts are provided by H172 and D174. The interaction with TIMP2 stretch occupies residues 176–246 (YPFDGPSGLL…GALMFPIYTY (71 aa)). 4 residues coordinate Ca(2+): D179, G180, S182, and L184. H187 is a Zn(2+) binding site. The Ca(2+) site is built by N194, G196, and D198. H200 is a binding site for Zn(2+). Ca(2+) is bound by residues D202, D203, and E205. H222 contributes to the Zn(2+) binding site. Residue E223 is part of the active site. Zn(2+) contacts are provided by H226, H232, and M240. The interval 263-284 (QSLYGPGDEDPNPKHPKTPDKC) is disordered. An interaction with collagen region spans residues 268–471 (PGDEDPNPKH…VMPANSILWC (204 aa)). Residues 273 to 284 (PNPKHPKTPDKC) are compositionally biased toward basic and acidic residues. Hemopexin repeat units lie at residues 281 to 330 (PDKC…WPEL), 331 to 377 (PNRI…GLPK), 379 to 427 (VKKI…FPGI), and 428 to 471 (GDKV…ILWC). An intrachain disulfide couples C284 to C471. Residues D291, I293, D335, and A337 each contribute to the Ca(2+) site. At Y366 the chain carries Phosphotyrosine; by PKDCC. 4 residues coordinate Ca(2+): S383, A385, D432, and V434.

Belongs to the peptidase M10A family. As to quaternary structure, monomer. Interacts with TIMP1, TIMP2 and TIMP3. Binds (via the C-terminal region) to collagen. Ca(2+) is required as a cofactor. It depends on Zn(2+) as a cofactor. In terms of processing, the proenzyme is activated by removal of the propeptide; this cleavage can be effected by other matrix metalloproteinases, such as MMP2, MMP3 and MMP14 and may involve several cleavage steps. Cleavage can also be autocatalytic, after partial maturation by another protease or after treatment with 4-aminophenylmercuric acetate (APMA) (in vitro). Post-translationally, N-glycosylated. Tyrosine phosphorylated by PKDCC/VLK. As to expression, detected in fetal cartilage and calvaria, in chondrocytes of hypertrophic cartilage in vertebrae and in the dorsal end of ribs undergoing ossification, as well as in osteoblasts and periosteal cells below the inner periosteal region of ossified ribs. Detected in chondrocytes from in joint cartilage that have been treated with TNF and IL1B, but not in untreated chondrocytes. Detected in T lymphocytes. Detected in breast carcinoma tissue.

It localises to the secreted. The protein localises to the extracellular space. Its subcellular location is the extracellular matrix. Inhibited by TIMP1, TIMP2 and TIMP3. Inhibited by acetohydroxamic acid and other zinc chelators. Its function is as follows. Plays a role in the degradation of extracellular matrix proteins including fibrillar collagen, fibronectin, TNC and ACAN. Cleaves triple helical collagens, including type I, type II and type III collagen, but has the highest activity with soluble type II collagen. Can also degrade collagen type IV, type XIV and type X. May also function by activating or degrading key regulatory proteins, such as TGFB1 and CCN2. Plays a role in wound healing, tissue remodeling, cartilage degradation, bone development, bone mineralization and ossification. Required for normal embryonic bone development and ossification. Plays a role in the healing of bone fractures via endochondral ossification. Plays a role in wound healing, probably by a mechanism that involves proteolytic activation of TGFB1 and degradation of CCN2. Plays a role in keratinocyte migration during wound healing. May play a role in cell migration and in tumor cell invasion. This is Collagenase 3 (MMP13) from Homo sapiens (Human).